We begin with the raw amino-acid sequence, 424 residues long: UDP-N-acetylglucosamine 1-carboxyvinyltransferase (424 aa).

Residue Lys-22–Asn-23 coordinates phosphoenolpyruvate. Position 93 (Arg-93) interacts with UDP-N-acetyl-alpha-D-glucosamine. Cys-117 (proton donor) is an active-site residue. A 2-(S-cysteinyl)pyruvic acid O-phosphothioketal modification is found at Cys-117. UDP-N-acetyl-alpha-D-glucosamine is bound by residues Arg-122–Leu-126, Lys-162–Val-165, Asp-307, and Ile-329.

The protein belongs to the EPSP synthase family. MurA subfamily.

It localises to the cytoplasm. The catalysed reaction is phosphoenolpyruvate + UDP-N-acetyl-alpha-D-glucosamine = UDP-N-acetyl-3-O-(1-carboxyvinyl)-alpha-D-glucosamine + phosphate. Its pathway is cell wall biogenesis; peptidoglycan biosynthesis. Its function is as follows. Cell wall formation. Adds enolpyruvyl to UDP-N-acetylglucosamine. This chain is UDP-N-acetylglucosamine 1-carboxyvinyltransferase, found in Haemophilus influenzae (strain 86-028NP).